The chain runs to 217 residues: Uracil-DNA glycosylase (217 aa).

Asp62 (proton acceptor) is an active-site residue.

This sequence belongs to the uracil-DNA glycosylase (UDG) superfamily. UNG family.

The protein resides in the cytoplasm. The enzyme catalyses Hydrolyzes single-stranded DNA or mismatched double-stranded DNA and polynucleotides, releasing free uracil.. In terms of biological role, excises uracil residues from the DNA which can arise as a result of misincorporation of dUMP residues by DNA polymerase or due to deamination of cytosine. The protein is Uracil-DNA glycosylase of Streptococcus pyogenes serotype M18 (strain MGAS8232).